The following is a 751-amino-acid chain: Catalase-peroxidase 1 (751 aa).

Positions 1 to 11 (MTDKQHTRSVS) are enriched in basic and acidic residues. The disordered stretch occupies residues 1–31 (MTDKQHTRSVSESENPAIPSPTPKVSRPRRN). Residues 103 to 225 (WHAAGTYRIA…LANVQMGLIY (123 aa)) constitute a cross-link (tryptophyl-tyrosyl-methioninium (Trp-Tyr) (with M-251)). Catalysis depends on His-104, which acts as the Proton acceptor. The segment at residues 225 to 251 (YVNPEGPGGNPDPLAAARDIRETFARM) is a cross-link (tryptophyl-tyrosyl-methioninium (Tyr-Met) (with W-103)). His-266 provides a ligand contact to heme b. Positions 345-375 (AGAKQWKPKNPEANDTVPDAHGASRRHSPTM) are disordered.

This sequence belongs to the peroxidase family. Peroxidase/catalase subfamily. In terms of assembly, homodimer or homotetramer. Heme b serves as cofactor. Post-translationally, formation of the three residue Trp-Tyr-Met cross-link is important for the catalase, but not the peroxidase activity of the enzyme.

It carries out the reaction H2O2 + AH2 = A + 2 H2O. It catalyses the reaction 2 H2O2 = O2 + 2 H2O. Its function is as follows. Bifunctional enzyme with both catalase and broad-spectrum peroxidase activity. The polypeptide is Catalase-peroxidase 1 (Cupriavidus pinatubonensis (strain JMP 134 / LMG 1197) (Cupriavidus necator (strain JMP 134))).